The chain runs to 345 residues: Mariner Mos1 transposase (345 aa).

The interval 1 to 112 (MSSFVPNKEQ…VSNRLREMGK (112 aa)) is DNA-binding. 2 consecutive DNA-binding regions (H-T-H motif) follow at residues 24 to 55 (TAAESHRMLVEAFGEQVPTVKKCERWFQRFKS) and 89 to 110 (QKQLAEQLEVSQQAVSNRLREM). The linker stretch occupies residues 113-125 (IQKVGRWVPHELN). The segment at 126 to 345 (ERQMERRKNT…CVASDGKYLE (220 aa)) is catalytic. Mg(2+) contacts are provided by Asp-156, Asp-249, and Asp-284.

In terms of assembly, homodimer. The complex has a trans arrangement, with each transposon end recognized by the DNA binding region of one transposase monomer and by the active site of the other monomer. Mg(2+) is required as a cofactor. It depends on Mn(2+) as a cofactor.

Its subcellular location is the nucleus. In terms of biological role, mediates transposition of transposon Mos1 by a 'cut and paste' mechanism. Transposases are sequence-specific nucleases and strand transferases that catalyze transposition through an ordered series of events: sequence-specific binding of transposase to the terminal inverted repeats (IR) present at each end of the transposon, pairing of the transposon IRs in a paired-end complex (PEC), cleavage of one or both DNA strands at each transposon end, capture of target DNA, and strand transfer to insert the transposon at a new site. This is Mariner Mos1 transposase (mariner\T) from Drosophila mauritiana (Fruit fly).